The sequence spans 157 residues: Small ribosomal subunit protein bS6 (157 aa).

Residues 96 to 151 (HEEGPSAMMRKADRDRDRDERGGGGFRGDREGGFRGDREGGGFRGDRGPRRPRDDA) show a composition bias toward basic and acidic residues. Positions 96-157 (HEEGPSAMMR…RDDAPAATEE (62 aa)) are disordered.

The protein belongs to the bacterial ribosomal protein bS6 family.

Its function is as follows. Binds together with bS18 to 16S ribosomal RNA. The protein is Small ribosomal subunit protein bS6 of Rhodopseudomonas palustris (strain BisA53).